We begin with the raw amino-acid sequence, 929 residues long: Synaptopodin (929 aa).

M1 is subject to N-acetylmethionine. Positions 1–12 (MLGPHLPPPPLA) are enriched in pro residues. The disordered stretch occupies residues 1–260 (MLGPHLPPPP…EASLLRHLEK (260 aa)). Basic and acidic residues-rich tracts occupy residues 60 to 69 (GVSRSGDDSA) and 91 to 110 (SREEQGASQHDDRASQDWDV). S140 carries the phosphoserine modification. Residues 142–151 (TEKDLKEAKA) are compositionally biased toward basic and acidic residues. A compositionally biased stretch (polar residues) spans 152–170 (RSQQIAAQLTTPPSSNSRG). S207 is modified (phosphoserine). The segment covering 224–234 (EPGPPRHPSPQ) has biased composition (pro residues). S263 is subject to Phosphoserine. The segment at 285–389 (GLHLSQNREA…TLCADGQPQA (105 aa)) is disordered. Low complexity predominate over residues 317–332 (LASPSATLTTPTSNSS). N330 is a glycosylation site (N-linked (GlcNAc...) asparagine). Residues 333 to 379 (HNPPATDVNQNPPATVVPQSLPLSSIQQNSSEAQLPSNGTGPASKPS) show a composition bias toward polar residues. A phosphoserine mark is found at S501 and S525. Residues 509–558 (FGEKAPAPQPPSLPDRSPRPQRHIMSRSPMVERRMMGQRSPASERRPLGN) form a disordered region. At T560 the chain carries Phosphothreonine. The short motif at 562–565 (PPTY) is the PPxY motif element. A Phosphoserine modification is found at S580. Positions 581-584 (PPSY) match the PPxY motif motif. Disordered stretches follow at residues 589 to 610 (PSSDPKSSHLKGQAVPASKTGI) and 630 to 726 (KPKV…KGAE). A compositionally biased stretch (basic and acidic residues) spans 646–656 (ADEKRRQRDQG). A phosphoserine mark is found at S685, S702, and Y738. The segment covering 685 to 698 (SPAAAEEVVPEWAS) has biased composition (low complexity). The tract at residues 740–763 (IESSSHTPELARCPSPTMSLPSSW) is disordered. T746 bears the Phosphothreonine mark. A phosphoserine mark is found at S754, S758, and S779. T783 is subject to Phosphothreonine. Residues P784, T804, R812, K826, S833, S854, P871, and P894 each carry the phosphoserine modification. A compositionally biased stretch (low complexity) spans 826–839 (KVSPRAASPAKPSS). Residues 826 to 916 (KVSPRAASPA…RPSFSTRNAG (91 aa)) form a disordered region. Positions 866-880 (GLYTSPGQDSLQPTA) are enriched in polar residues.

The protein belongs to the synaptopodin family. In terms of assembly, interacts with BAIAP1. Interacts with actin. Interacts (via PPxY motifs) with WWC1 (via WW domains). O-glycosylated. As to expression, expressed in cerebral cortex.

Its subcellular location is the cytoplasm. It is found in the cytoskeleton. It localises to the cell junction. The protein localises to the tight junction. The protein resides in the perikaryon. Its subcellular location is the cell projection. It is found in the dendritic spine. It localises to the postsynaptic density. The protein localises to the synapse. The protein resides in the cytosol. Actin-associated protein that may play a role in modulating actin-based shape and motility of dendritic spines and renal podocyte foot processes. Seems to be essential for the formation of spine apparatuses in spines of telencephalic neurons, which is involved in synaptic plasticity. This is Synaptopodin (SYNPO) from Homo sapiens (Human).